A 210-amino-acid polypeptide reads, in one-letter code: Large ribosomal subunit protein bL25 (210 aa).

It belongs to the bacterial ribosomal protein bL25 family. CTC subfamily. Part of the 50S ribosomal subunit; part of the 5S rRNA/L5/L18/L25 subcomplex. Contacts the 5S rRNA. Binds to the 5S rRNA independently of L5 and L18.

This is one of the proteins that binds to the 5S RNA in the ribosome where it forms part of the central protuberance. The protein is Large ribosomal subunit protein bL25 of Frankia casuarinae (strain DSM 45818 / CECT 9043 / HFP020203 / CcI3).